The chain runs to 345 residues: S-adenosylmethionine:tRNA ribosyltransferase-isomerase (345 aa).

Belongs to the QueA family. Monomer.

It is found in the cytoplasm. The catalysed reaction is 7-aminomethyl-7-carbaguanosine(34) in tRNA + S-adenosyl-L-methionine = epoxyqueuosine(34) in tRNA + adenine + L-methionine + 2 H(+). It functions in the pathway tRNA modification; tRNA-queuosine biosynthesis. Transfers and isomerizes the ribose moiety from AdoMet to the 7-aminomethyl group of 7-deazaguanine (preQ1-tRNA) to give epoxyqueuosine (oQ-tRNA). This Shewanella sp. (strain W3-18-1) protein is S-adenosylmethionine:tRNA ribosyltransferase-isomerase.